The chain runs to 218 residues: Glutathione S-transferase class-mu 26 kDa isozyme (218 aa).

Positions 2–83 constitute a GST N-terminal domain; sequence SPILGYWKIK…YIADKHNMLG (82 aa). Residues 7–8, 41–45, 54–55, and 67–68 contribute to the glutathione site; these read YW, WRNKK, NL, and QS. The region spanning 85–203 is the GST C-terminal domain; sequence CPKERAEISM…KSSKYIAWPL (119 aa). Y111 is a substrate binding site.

This sequence belongs to the GST superfamily. Mu family. As to quaternary structure, homodimer.

It catalyses the reaction RX + glutathione = an S-substituted glutathione + a halide anion + H(+). Conjugation of reduced glutathione to a wide number of exogenous and endogenous hydrophobic electrophiles. Its function is as follows. GST isoenzymes appear to play a central role in the parasite detoxification system. Other functions are also suspected including a role in increasing the solubility of haematin in the parasite gut. This is Glutathione S-transferase class-mu 26 kDa isozyme from Schistosoma japonicum (Blood fluke).